A 618-amino-acid chain; its full sequence is UvrABC system protein C (618 aa).

The 79-residue stretch at 20–98 (TAPGVYRMYA…IKSLSPRYNV (79 aa)) folds into the GIY-YIG domain. The 36-residue stretch at 207-242 (DQLGEEIMQSMQQASEALEFERAARLRDLLSSLRSM) folds into the UVR domain.

This sequence belongs to the UvrC family. As to quaternary structure, interacts with UvrB in an incision complex.

The protein localises to the cytoplasm. In terms of biological role, the UvrABC repair system catalyzes the recognition and processing of DNA lesions. UvrC both incises the 5' and 3' sides of the lesion. The N-terminal half is responsible for the 3' incision and the C-terminal half is responsible for the 5' incision. This Xanthomonas oryzae pv. oryzae (strain MAFF 311018) protein is UvrABC system protein C.